The primary structure comprises 103 residues: Large ribosomal subunit protein bL21 (103 aa).

Belongs to the bacterial ribosomal protein bL21 family. In terms of assembly, part of the 50S ribosomal subunit. Contacts protein L20.

In terms of biological role, this protein binds to 23S rRNA in the presence of protein L20. This chain is Large ribosomal subunit protein bL21, found in Hamiltonella defensa subsp. Acyrthosiphon pisum (strain 5AT).